We begin with the raw amino-acid sequence, 431 residues long: 3-deoxy-D-manno-octulosonic acid transferase (431 aa).

Residues 5 to 27 (WLTSRLYDAFLVCAFFVSAPRIF) traverse the membrane as a helical; Signal-anchor segment. Glu67 functions as the Proton acceptor in the catalytic mechanism. Residues 275-276 (PR), 315-317 (MGV), and 342-345 (NLLE) contribute to the CMP site.

The protein belongs to the glycosyltransferase group 1 family. Glycosyltransferase 30 subfamily.

It is found in the cell inner membrane. The enzyme catalyses lipid IVA (E. coli) + CMP-3-deoxy-beta-D-manno-octulosonate = alpha-Kdo-(2-&gt;6)-lipid IVA (E. coli) + CMP + H(+). It carries out the reaction alpha-Kdo-(2-&gt;6)-lipid IVA (E. coli) + CMP-3-deoxy-beta-D-manno-octulosonate = alpha-Kdo-(2-&gt;4)-alpha-Kdo-(2-&gt;6)-lipid IVA (E. coli) + CMP + H(+). It catalyses the reaction alpha-Kdo-(2-&gt;4)-alpha-Kdo-(2-&gt;6)-lipid IVA (E. coli) + CMP-3-deoxy-beta-D-manno-octulosonate = alpha-Kdo-(2-&gt;8)-alpha-Kdo-(2-&gt;4)-alpha-Kdo-(2-&gt;6)-lipid IVA (E. coli) + CMP + H(+). It participates in bacterial outer membrane biogenesis; LPS core biosynthesis. Its function is as follows. Involved in lipopolysaccharide (LPS) biosynthesis. Catalyzes the transfer of three 3-deoxy-D-manno-octulosonate (Kdo) residues from CMP-Kdo to lipid IV(A), the tetraacyldisaccharide-1,4'-bisphosphate precursor of lipid A. Thus generates the genus-specific LPS epitope of Chlamydia, composed of the trisaccharide alpha-Kdo-(2-&gt;8)-alpha-Kdo-(2-&gt;4)-alpha-Kdo. The polypeptide is 3-deoxy-D-manno-octulosonic acid transferase (waaA) (Chlamydia trachomatis serovar D (strain ATCC VR-885 / DSM 19411 / UW-3/Cx)).